Here is a 22-residue protein sequence, read N- to C-terminus: Brain peptide MVPVPVHHMADELLRNGPDTVI (22 aa).

The polypeptide is Brain peptide MVPVPVHHMADELLRNGPDTVI (Apis mellifera (Honeybee)).